Here is a 163-residue protein sequence, read N- to C-terminus: Ribosome maturation factor RimM (163 aa).

The 72-residue stretch at 90–161 (EGRHYWGDLE…VVVDPPEGLL (72 aa)) folds into the PRC barrel domain.

It belongs to the RimM family. Binds ribosomal protein uS19.

It is found in the cytoplasm. An accessory protein needed during the final step in the assembly of 30S ribosomal subunit, possibly for assembly of the head region. Essential for efficient processing of 16S rRNA. May be needed both before and after RbfA during the maturation of 16S rRNA. It has affinity for free ribosomal 30S subunits but not for 70S ribosomes. The polypeptide is Ribosome maturation factor RimM (Anaeromyxobacter dehalogenans (strain 2CP-C)).